Reading from the N-terminus, the 120-residue chain is uncharacterized protein (120 aa).

Positions 1-19 are cleaved as a signal peptide; the sequence is MKKIVCAVVALLLTLPAWA.

This is an uncharacterized protein from Salmonella typhimurium (strain LT2 / SGSC1412 / ATCC 700720).